The following is a 715-amino-acid chain: Fatty acid oxidation complex subunit alpha (715 aa).

Residues 1 to 190 (MIYQGKAITV…KVGAVDAVVA (190 aa)) are enoyl-CoA hydratase/isomerase. Asp297 contacts substrate. Residues 312–715 (HDAKQAAVLG…MAKNGQRFFN (404 aa)) form a 3-hydroxyacyl-CoA dehydrogenase region. NAD(+) contacts are provided by residues Met325, Asp344, 401–403 (VVE), Lys408, and Ser430. His451 acts as the For 3-hydroxyacyl-CoA dehydrogenase activity in catalysis. Asn454 serves as a coordination point for NAD(+). Residues Asn501 and Tyr660 each contribute to the substrate site.

This sequence in the N-terminal section; belongs to the enoyl-CoA hydratase/isomerase family. In the C-terminal section; belongs to the 3-hydroxyacyl-CoA dehydrogenase family. In terms of assembly, heterotetramer of two alpha chains (FadB) and two beta chains (FadA).

The catalysed reaction is a (3S)-3-hydroxyacyl-CoA + NAD(+) = a 3-oxoacyl-CoA + NADH + H(+). It catalyses the reaction a (3S)-3-hydroxyacyl-CoA = a (2E)-enoyl-CoA + H2O. It carries out the reaction a 4-saturated-(3S)-3-hydroxyacyl-CoA = a (3E)-enoyl-CoA + H2O. The enzyme catalyses (3S)-3-hydroxybutanoyl-CoA = (3R)-3-hydroxybutanoyl-CoA. The catalysed reaction is a (3Z)-enoyl-CoA = a 4-saturated (2E)-enoyl-CoA. It catalyses the reaction a (3E)-enoyl-CoA = a 4-saturated (2E)-enoyl-CoA. The protein operates within lipid metabolism; fatty acid beta-oxidation. Functionally, involved in the aerobic and anaerobic degradation of long-chain fatty acids via beta-oxidation cycle. Catalyzes the formation of 3-oxoacyl-CoA from enoyl-CoA via L-3-hydroxyacyl-CoA. It can also use D-3-hydroxyacyl-CoA and cis-3-enoyl-CoA as substrate. In Ectopseudomonas oleovorans (Pseudomonas oleovorans), this protein is Fatty acid oxidation complex subunit alpha.